Consider the following 435-residue polypeptide: Gamma-glutamyl phosphate reductase (435 aa).

Belongs to the gamma-glutamyl phosphate reductase family.

Its subcellular location is the cytoplasm. The catalysed reaction is L-glutamate 5-semialdehyde + phosphate + NADP(+) = L-glutamyl 5-phosphate + NADPH + H(+). The protein operates within amino-acid biosynthesis; L-proline biosynthesis; L-glutamate 5-semialdehyde from L-glutamate: step 2/2. Catalyzes the NADPH-dependent reduction of L-glutamate 5-phosphate into L-glutamate 5-semialdehyde and phosphate. The product spontaneously undergoes cyclization to form 1-pyrroline-5-carboxylate. The chain is Gamma-glutamyl phosphate reductase from Synechococcus sp. (strain WH7803).